A 369-amino-acid chain; its full sequence is Uroporphyrinogen decarboxylase (369 aa).

Arg39, Ala41, Arg43, Arg52, Asp88, Tyr166, Ser221, and His341 together coordinate coproporphyrinogen I. Arg39, Ala41, and Arg43 together coordinate coproporphyrinogen III. Positions 88, 166, 221, and 341 each coordinate coproporphyrinogen III.

It belongs to the uroporphyrinogen decarboxylase family. In terms of assembly, homodimer.

It is found in the cytoplasm. It localises to the cytosol. It carries out the reaction uroporphyrinogen III + 4 H(+) = coproporphyrinogen III + 4 CO2. It catalyses the reaction uroporphyrinogen I + 4 H(+) = coproporphyrinogen I + 4 CO2. It participates in porphyrin-containing compound metabolism; protoporphyrin-IX biosynthesis; coproporphyrinogen-III from 5-aminolevulinate: step 4/4. Catalyzes the sequential decarboxylation of the four acetate side chains of uroporphyrinogen to form coproporphyrinogen and participates in the fifth step in the heme biosynthetic pathway. Isomer I or isomer III of uroporphyrinogen may serve as substrate, but only coproporphyrinogen III can ultimately be converted to heme. In vitro also decarboxylates pentacarboxylate porphyrinogen I. This is Uroporphyrinogen decarboxylase from Danio rerio (Zebrafish).